Consider the following 129-residue polypeptide: UPF0325 protein Spro_3794 (129 aa).

The protein belongs to the UPF0325 family.

The sequence is that of UPF0325 protein Spro_3794 from Serratia proteamaculans (strain 568).